A 161-amino-acid polypeptide reads, in one-letter code: Large ribosomal subunit protein bL9 (161 aa).

Belongs to the bacterial ribosomal protein bL9 family.

In terms of biological role, binds to the 23S rRNA. This is Large ribosomal subunit protein bL9 from Blochmanniella floridana.